Here is a 148-residue protein sequence, read N- to C-terminus: MKVILKQDVKGLGKKEQMVEASDGYARNFLLPKGLAVEATSANVNIMKTKKEAEAQKKEREVAQAKELAKKIKDITVTLKVKAGENGKLFGSITSKDVAEALKTQQKLDIDKKKLVMPDSVKSIGTFDVEVKLYPEINSKFTVKIENL.

Belongs to the bacterial ribosomal protein bL9 family.

Binds to the 23S rRNA. The polypeptide is Large ribosomal subunit protein bL9 (Ruminiclostridium cellulolyticum (strain ATCC 35319 / DSM 5812 / JCM 6584 / H10) (Clostridium cellulolyticum)).